A 170-amino-acid polypeptide reads, in one-letter code: 3-hydroxyanthranilate 3,4-dioxygenase (170 aa).

Arg44 contacts O2. The Fe cation site is built by His48, Glu54, and His92. Glu54 is a substrate binding site. The substrate site is built by Arg96 and Glu106. Residues Cys121, Cys124, Cys158, and Cys161 each contribute to the a divalent metal cation site.

The protein belongs to the 3-HAO family. Fe(2+) serves as cofactor.

The protein localises to the cytoplasm. It carries out the reaction 3-hydroxyanthranilate + O2 = (2Z,4Z)-2-amino-3-carboxymuconate 6-semialdehyde. It functions in the pathway cofactor biosynthesis; NAD(+) biosynthesis; quinolinate from L-kynurenine: step 3/3. Its function is as follows. Catalyzes the oxidative ring opening of 3-hydroxyanthranilate to 2-amino-3-carboxymuconate semialdehyde, which spontaneously cyclizes to quinolinate. The chain is 3-hydroxyanthranilate 3,4-dioxygenase from Scheffersomyces stipitis (strain ATCC 58785 / CBS 6054 / NBRC 10063 / NRRL Y-11545) (Yeast).